The chain runs to 143 residues: Large ribosomal subunit protein uL13 (143 aa).

The protein belongs to the universal ribosomal protein uL13 family. As to quaternary structure, part of the 50S ribosomal subunit.

Functionally, this protein is one of the early assembly proteins of the 50S ribosomal subunit, although it is not seen to bind rRNA by itself. It is important during the early stages of 50S assembly. The protein is Large ribosomal subunit protein uL13 of Dichelobacter nodosus (strain VCS1703A).